The following is an 80-amino-acid chain: ATP synthase subunit c (80 aa).

The next 2 membrane-spanning stretches (helical) occupy residues 11 to 31 and 54 to 74; these read IAATIMMGLAAIGAAIGIGIL and FIVMGLVDAIPMITVGLGLYI.

This sequence belongs to the ATPase C chain family. As to quaternary structure, F-type ATPases have 2 components, F(1) - the catalytic core - and F(0) - the membrane proton channel. F(1) has five subunits: alpha(3), beta(3), gamma(1), delta(1), epsilon(1). F(0) has three main subunits: a(1), b(2) and c(10-14). The alpha and beta chains form an alternating ring which encloses part of the gamma chain. F(1) is attached to F(0) by a central stalk formed by the gamma and epsilon chains, while a peripheral stalk is formed by the delta and b chains.

It is found in the cell membrane. In terms of biological role, f(1)F(0) ATP synthase produces ATP from ADP in the presence of a proton or sodium gradient. F-type ATPases consist of two structural domains, F(1) containing the extramembraneous catalytic core and F(0) containing the membrane proton channel, linked together by a central stalk and a peripheral stalk. During catalysis, ATP synthesis in the catalytic domain of F(1) is coupled via a rotary mechanism of the central stalk subunits to proton translocation. Functionally, key component of the F(0) channel; it plays a direct role in translocation across the membrane. A homomeric c-ring of between 10-14 subunits forms the central stalk rotor element with the F(1) delta and epsilon subunits. The polypeptide is ATP synthase subunit c (Baumannia cicadellinicola subsp. Homalodisca coagulata).